A 158-amino-acid chain; its full sequence is NAD(P)H-quinone oxidoreductase subunit J, chloroplastic (158 aa).

Belongs to the complex I 30 kDa subunit family. NDH is composed of at least 16 different subunits, 5 of which are encoded in the nucleus.

The protein resides in the plastid. It is found in the chloroplast thylakoid membrane. It carries out the reaction a plastoquinone + NADH + (n+1) H(+)(in) = a plastoquinol + NAD(+) + n H(+)(out). The catalysed reaction is a plastoquinone + NADPH + (n+1) H(+)(in) = a plastoquinol + NADP(+) + n H(+)(out). NDH shuttles electrons from NAD(P)H:plastoquinone, via FMN and iron-sulfur (Fe-S) centers, to quinones in the photosynthetic chain and possibly in a chloroplast respiratory chain. The immediate electron acceptor for the enzyme in this species is believed to be plastoquinone. Couples the redox reaction to proton translocation, and thus conserves the redox energy in a proton gradient. This is NAD(P)H-quinone oxidoreductase subunit J, chloroplastic from Amborella trichopoda.